Consider the following 403-residue polypeptide: Na(+)-translocating NADH-quinone reductase subunit B (403 aa).

Transmembrane regions (helical) follow at residues 56-76 (IMIMVWAATFPAMFYGMYNIG), 114-134 (LAMFLYGACFFLPIYAVTFIV), and 165-185 (LPATIPLWQVALGITFGVVIA). Residue T231 is modified to FMN phosphoryl threonine. The next 5 helical transmembrane spans lie at 260-280 (GSVGEVSSLAILLGGLFIIYM), 287-307 (IVLGVLLGGAVFSTLLNVIGS), 312-332 (MFAMPWYWHVVTGGFAFGMFF), 348-368 (WAYGFLIGLMCVLIRVLNPAF), and 371-391 (GMMLAILFANLWAPLFDYFVA).

Belongs to the NqrB/RnfD family. In terms of assembly, composed of six subunits; NqrA, NqrB, NqrC, NqrD, NqrE and NqrF. It depends on FMN as a cofactor.

It is found in the cell inner membrane. The enzyme catalyses a ubiquinone + n Na(+)(in) + NADH + H(+) = a ubiquinol + n Na(+)(out) + NAD(+). Functionally, NQR complex catalyzes the reduction of ubiquinone-1 to ubiquinol by two successive reactions, coupled with the transport of Na(+) ions from the cytoplasm to the periplasm. NqrA to NqrE are probably involved in the second step, the conversion of ubisemiquinone to ubiquinol. The sequence is that of Na(+)-translocating NADH-quinone reductase subunit B from Pseudoalteromonas atlantica (strain T6c / ATCC BAA-1087).